A 227-amino-acid polypeptide reads, in one-letter code: Ribose-5-phosphate isomerase A (227 aa).

Residues 26–29, 82–85, and 95–98 each bind substrate; these read TGST, DGAD, and KGGG. E104 acts as the Proton acceptor in catalysis. K122 lines the substrate pocket.

The protein belongs to the ribose 5-phosphate isomerase family. In terms of assembly, homodimer.

It carries out the reaction aldehydo-D-ribose 5-phosphate = D-ribulose 5-phosphate. It functions in the pathway carbohydrate degradation; pentose phosphate pathway; D-ribose 5-phosphate from D-ribulose 5-phosphate (non-oxidative stage): step 1/1. Its function is as follows. Catalyzes the reversible conversion of ribose-5-phosphate to ribulose 5-phosphate. This is Ribose-5-phosphate isomerase A from Streptococcus equi subsp. equi (strain 4047).